Reading from the N-terminus, the 515-residue chain is Glucose-6-phosphate 1-dehydrogenase 6, cytoplasmic (515 aa).

NADP(+)-binding positions include 38 to 45 (GASGDLAK), arginine 73, tyrosine 155, and lysine 182. Residues lysine 182, 212-216 (HYLGK), glutamate 250, and aspartate 269 each bind D-glucose 6-phosphate. The active-site Proton acceptor is the histidine 274. Position 357 (lysine 357) interacts with NADP(+). Residues lysine 360 and arginine 365 each coordinate D-glucose 6-phosphate. 3 residues coordinate NADP(+): lysine 366, arginine 370, and arginine 394. Glutamine 396 provides a ligand contact to D-glucose 6-phosphate. Residues 402-404 (YMK), 422-424 (DLS), arginine 488, and tryptophan 510 contribute to the NADP(+) site.

The protein belongs to the glucose-6-phosphate dehydrogenase family. In terms of assembly, forms homodimer. In terms of tissue distribution, expressed in roots, leaves, stems, buds, flowers and siliques.

The protein resides in the cytoplasm. It localises to the cytosol. The enzyme catalyses D-glucose 6-phosphate + NADP(+) = 6-phospho-D-glucono-1,5-lactone + NADPH + H(+). It participates in carbohydrate degradation; pentose phosphate pathway; D-ribulose 5-phosphate from D-glucose 6-phosphate (oxidative stage): step 1/3. Regulated by metabolites. Catalyzes the rate-limiting step of the oxidative pentose-phosphate pathway, which represents a route for the dissimilation of carbohydrates besides glycolysis. The main function of this enzyme is to provide reducing power (NADPH) and pentose phosphates for fatty acid and nucleic acid synthesis which are involved in membrane synthesis and cell division. This chain is Glucose-6-phosphate 1-dehydrogenase 6, cytoplasmic, found in Arabidopsis thaliana (Mouse-ear cress).